Consider the following 315-residue polypeptide: Protein ORANGE-LIKE, chloroplastic (315 aa).

The N-terminal 16 residues, 1–16 (MTCFSSATPHRHHLLL), are a transit peptide targeting the chloroplast. The next 2 membrane-spanning stretches (helical) occupy residues 155–175 (LYST…LIAP) and 207–227 (IVAS…LIEV). A CR-type zinc finger spans residues 225-307 (IEVNNVKQQE…CTGMVTASEH (83 aa)). The stretch at 238 to 245 (CKYCLGTG) is one CXXCXGXG motif repeat. The CXXCXXXG motif repeat unit spans residues 249-256 (CARCSASG). One copy of the CXXCXGXG motif repeat lies at 282–289 (CLNCSGAG). The stretch at 293–300 (CPTCLCTG) is one CXXCXXXG motif repeat.

The protein belongs to the orange-like family. As to quaternary structure, interacts with PSY1.

The protein localises to the plastid. Its subcellular location is the chloroplast membrane. Functionally, may be associated with accumulation of carotenoids in chromoplasts. The protein is Protein ORANGE-LIKE, chloroplastic (ORLIKE) of Arabidopsis thaliana (Mouse-ear cress).